Here is a 256-residue protein sequence, read N- to C-terminus: 3-dehydroquinate dehydratase (256 aa).

3-dehydroquinate contacts are provided by residues Ser-19, 38 to 40, and Arg-68; that span reads EIR. His-122 (proton donor/acceptor) is an active-site residue. Lys-147 (schiff-base intermediate with substrate) is an active-site residue. 3-dehydroquinate-binding residues include Arg-185, Thr-204, and Gln-208.

Belongs to the type-I 3-dehydroquinase family. In terms of assembly, homodimer.

It carries out the reaction 3-dehydroquinate = 3-dehydroshikimate + H2O. The protein operates within metabolic intermediate biosynthesis; chorismate biosynthesis; chorismate from D-erythrose 4-phosphate and phosphoenolpyruvate: step 3/7. Involved in the third step of the chorismate pathway, which leads to the biosynthesis of aromatic amino acids. Catalyzes the cis-dehydration of 3-dehydroquinate (DHQ) and introduces the first double bond of the aromatic ring to yield 3-dehydroshikimate. The polypeptide is 3-dehydroquinate dehydratase (Methanospirillum hungatei JF-1 (strain ATCC 27890 / DSM 864 / NBRC 100397 / JF-1)).